We begin with the raw amino-acid sequence, 291 residues long: Pyridoxal 5'-phosphate synthase subunit PdxS (291 aa).

D-ribose 5-phosphate is bound at residue Asp-23. The active-site Schiff-base intermediate with D-ribose 5-phosphate is the Lys-80. Position 152 (Gly-152) interacts with D-ribose 5-phosphate. Arg-164 lines the D-glyceraldehyde 3-phosphate pocket. D-ribose 5-phosphate-binding positions include Gly-213 and 234–235 (GS).

The protein belongs to the PdxS/SNZ family. As to quaternary structure, in the presence of PdxT, forms a dodecamer of heterodimers.

The enzyme catalyses aldehydo-D-ribose 5-phosphate + D-glyceraldehyde 3-phosphate + L-glutamine = pyridoxal 5'-phosphate + L-glutamate + phosphate + 3 H2O + H(+). It functions in the pathway cofactor biosynthesis; pyridoxal 5'-phosphate biosynthesis. In terms of biological role, catalyzes the formation of pyridoxal 5'-phosphate from ribose 5-phosphate (RBP), glyceraldehyde 3-phosphate (G3P) and ammonia. The ammonia is provided by the PdxT subunit. Can also use ribulose 5-phosphate and dihydroxyacetone phosphate as substrates, resulting from enzyme-catalyzed isomerization of RBP and G3P, respectively. This Haemophilus influenzae (strain PittGG) protein is Pyridoxal 5'-phosphate synthase subunit PdxS.